The primary structure comprises 508 residues: Glycerol kinase (508 aa).

Position 14 (threonine 14) interacts with ADP. 3 residues coordinate ATP: threonine 14, threonine 15, and serine 16. Threonine 14 contributes to the sn-glycerol 3-phosphate binding site. Arginine 18 serves as a coordination point for ADP. Positions 84, 85, 136, and 245 each coordinate sn-glycerol 3-phosphate. Arginine 84, glutamate 85, tyrosine 136, aspartate 245, and glutamine 246 together coordinate glycerol. ADP contacts are provided by threonine 267 and glycine 314. Positions 267, 314, and 318 each coordinate ATP. Residue asparagine 419 participates in ADP binding.

It belongs to the FGGY kinase family.

The catalysed reaction is glycerol + ATP = sn-glycerol 3-phosphate + ADP + H(+). It participates in polyol metabolism; glycerol degradation via glycerol kinase pathway; sn-glycerol 3-phosphate from glycerol: step 1/1. Inhibited by fructose 1,6-bisphosphate (FBP). In terms of biological role, key enzyme in the regulation of glycerol uptake and metabolism. Catalyzes the phosphorylation of glycerol to yield sn-glycerol 3-phosphate. This Bordetella pertussis (strain Tohama I / ATCC BAA-589 / NCTC 13251) protein is Glycerol kinase.